A 224-amino-acid chain; its full sequence is UPF0441 protein PC1_0312 (224 aa).

Residues 178–224 form a disordered region; the sequence is PKTALAPKPATTSTITRGGFGETVAKQNSMQRSSASSSSSSSRSMGG. Positions 209–224 are enriched in low complexity; that stretch reads RSSASSSSSSSRSMGG.

Belongs to the UPF0441 family.

In Pectobacterium carotovorum subsp. carotovorum (strain PC1), this protein is UPF0441 protein PC1_0312.